A 2338-amino-acid chain; its full sequence is Proto-oncogene tyrosine-protein kinase ROS (2338 aa).

Residues 1-27 form the signal peptide; the sequence is MKRIRWLTPKPATFVVLGCVWISVAQG. Residues 28–1853 lie on the Extracellular side of the membrane; that stretch reads TILSSCLTSC…EDGFWITETS (1826 aa). Asn-52 and Asn-77 each carry an N-linked (GlcNAc...) asparagine glycan. 2 Fibronectin type-III domains span residues 110 to 205 and 206 to 294; these read LPTA…VPET and APFI…PSPA. Residues Asn-333, Asn-361, Asn-480, Asn-623, Asn-934, and Asn-1010 are each glycosylated (N-linked (GlcNAc...) asparagine). Residues 566–666 enclose the Fibronectin type-III 3 domain; it reads LPGHPQEVSV…EPSVGTTLVP (101 aa). 2 Fibronectin type-III domains span residues 942-1037 and 1038-1145; these read IPDS…SVPS and APEN…TSEI. N-linked (GlcNAc...) asparagine glycosylation is present at Asn-1298. Fibronectin type-III domains are found at residues 1440-1548, 1549-1648, 1650-1743, and 1744-1845; these read VASN…TKSG, VPGA…VNMF, TPEK…TKAG, and VPSK…LVED. An N-linked (GlcNAc...) asparagine glycan is attached at Asn-1675. A helical membrane pass occupies residues 1854-1874; the sequence is FILTIIVGIFLVATVPLTFVW. Topologically, residues 1875–2338 are cytoplasmic; the sequence is HRSLKNHKAT…AHSGHGDVSE (464 aa). Positions 1937–2210 constitute a Protein kinase domain; sequence LSLRLLLGSG…YNIQDQLQLF (274 aa). ATP contacts are provided by residues 1943-1951 and Lys-1972; that span reads LGSGAFGEV. The active-site Proton acceptor is Asp-2071. Tyr-2266 bears the Phosphotyrosine; by autocatalysis mark. A disordered region spans residues 2277–2314; that stretch reads EDRYEGPLGSKESGLHDLKKDERQPADKDFCQQPQVAY. Over residues 2289–2306 the composition is skewed to basic and acidic residues; the sequence is SGLHDLKKDERQPADKDF. The residue at position 2325 (Tyr-2325) is a Phosphotyrosine; by autocatalysis.

Belongs to the protein kinase superfamily. Tyr protein kinase family. Insulin receptor subfamily. In terms of assembly, interacts with PTPN11; may activate the PI3 kinase-mTOR signaling pathway. Interacts with VAV3; constitutive interaction mediating VAV3 phosphorylation. Interacts with PTPN6 (via SH2 1 domain); the interaction is direct and promotes ROS1 dephosphorylation. Post-translationally, phosphorylated. Probably autophosphorylates. Phosphorylation at Tyr-2266 is required for the interaction with PTPN6 that mediates ROS1 dephosphorylation. Phosphorylation at Tyr-2266 stimulates the kinase activity and the activation of the ERK1 signaling cascade. Phosphorylation at Tyr-2266 and/or Tyr-2325 recruits PTPN11. In terms of tissue distribution, expressed in heart, lung, kidney and testis.

Its subcellular location is the cell membrane. The catalysed reaction is L-tyrosyl-[protein] + ATP = O-phospho-L-tyrosyl-[protein] + ADP + H(+). With respect to regulation, inhibited by dephosphorylation by PTPN6. In terms of biological role, orphan receptor tyrosine kinase (RTK) that plays a role in epithelial cell differentiation and regionalization of the proximal epididymal epithelium. NELL2 is an endogenous ligand for ROS1. Upon endogenous stimulation by NELL2, ROS1 activates the intracellular signaling pathway and triggers epididymal epithelial differentiation and subsequent sperm maturation. May activate several downstream signaling pathways related to cell differentiation, proliferation, growth and survival including the PI3 kinase-mTOR signaling pathway. Mediates the phosphorylation of PTPN11, an activator of this pathway. May also phosphorylate and activate the transcription factor STAT3 to control anchorage-independent cell growth. Mediates the phosphorylation and the activation of VAV3, a guanine nucleotide exchange factor regulating cell morphology. May activate other downstream signaling proteins including AKT1, MAPK1, MAPK3, IRS1 and PLCG2. The protein is Proto-oncogene tyrosine-protein kinase ROS (Ros1) of Rattus norvegicus (Rat).